The chain runs to 131 residues: Small ribosomal subunit protein uS8 (131 aa).

It belongs to the universal ribosomal protein uS8 family. Part of the 30S ribosomal subunit. Contacts proteins S5 and S12.

Its function is as follows. One of the primary rRNA binding proteins, it binds directly to 16S rRNA central domain where it helps coordinate assembly of the platform of the 30S subunit. In Mesomycoplasma hyopneumoniae (strain 7448) (Mycoplasma hyopneumoniae), this protein is Small ribosomal subunit protein uS8.